The chain runs to 502 residues: ATP synthase subunit alpha (502 aa).

169–176 lines the ATP pocket; it reads GDRQTGKT.

It belongs to the ATPase alpha/beta chains family. In terms of assembly, F-type ATPases have 2 components, CF(1) - the catalytic core - and CF(0) - the membrane proton channel. CF(1) has five subunits: alpha(3), beta(3), gamma(1), delta(1), epsilon(1). CF(0) has three main subunits: a(1), b(2) and c(9-12). The alpha and beta chains form an alternating ring which encloses part of the gamma chain. CF(1) is attached to CF(0) by a central stalk formed by the gamma and epsilon chains, while a peripheral stalk is formed by the delta and b chains.

The protein localises to the cell membrane. The enzyme catalyses ATP + H2O + 4 H(+)(in) = ADP + phosphate + 5 H(+)(out). Its function is as follows. Produces ATP from ADP in the presence of a proton gradient across the membrane. The alpha chain is a regulatory subunit. In Staphylococcus aureus (strain COL), this protein is ATP synthase subunit alpha.